The chain runs to 215 residues: Probable phosphoglycerate mutase GpmB (215 aa).

Residues 8 to 15, 21 to 22, arginine 58, 82 to 85, 104 to 105, and 151 to 152 each bind substrate; these read RHGETQWN, QG, ELDM, RR, and GI. Histidine 9 serves as the catalytic Tele-phosphohistidine intermediate. Glutamate 82 acts as the Proton donor/acceptor in catalysis.

This sequence belongs to the phosphoglycerate mutase family. GpmB subfamily.

It catalyses the reaction (2R)-2-phosphoglycerate = (2R)-3-phosphoglycerate. It functions in the pathway carbohydrate degradation; glycolysis; pyruvate from D-glyceraldehyde 3-phosphate: step 3/5. This chain is Probable phosphoglycerate mutase GpmB, found in Enterobacter sp. (strain 638).